The primary structure comprises 311 residues: MGLMAVLMLPLLLLGISGLLFIYQEASRLWSKSAVQNKVVVITDAISGLGKECARVFHAGGARLVLCGKNWEGLESLYATLTSVADPSKTFTPKLVLLDLSDISCVQDVAKEVLDCYGCVDILINNASVKVKGPAHKISLELDKKIMDANYFGPITLTKVLLPNMISRRTGQIVLVNNIQAKFGIPFRTAYAASKHAVMGFFDCLRAEVEEYDVVVSTVSPTFIRSYRASPEQRNWETSICKFFCRKLAYGVHPVEVAEEVMRTVRRKKQEVFMANPVPKAAVFIRTFFPEFFFAVVACGVKEKLNVPEEG.

An N-terminal signal peptide occupies residues 1–18; it reads MGLMAVLMLPLLLLGISG. NAD(+)-binding residues include Ser47, Leu49, Tyr191, Lys195, and Ser226. Tyr191 serves as the catalytic Proton acceptor.

This sequence belongs to the short-chain dehydrogenases/reductases (SDR) family. Expressed in skeletal muscle and cardiac muscle. Also expressed in liver, kidney, adipocytes and skin.

It is found in the sarcoplasmic reticulum membrane. The enzyme catalyses all-trans-retinol + NAD(+) = all-trans-retinal + NADH + H(+). Functionally, NADH-dependent oxidoreductase which catalyzes the oxidation of all-trans-retinol to all-trans-retinal. Plays a role in the regulation of cardiac and skeletal muscle metabolic functions. Maintains Ca(2+) intracellular homeostasis by repressing Ca(2+) release from the sarcoplasmic reticulum (SR) in myotubes, possibly through local alternations in NAD/NADH or retinol/retinal. Also plays a role in Ca(2+) homeostasis by controlling Ca(2+) overload in the cytosol and the SR in myotubes. Involved in glucose uptake into skeletal muscles and muscle performance by activating PI3K and mTORC2-mediated AKT1 phosphorylation signaling pathways, possibly through the action of its downstream catalytic product all-trans-retinoic acid. The sequence is that of Dehydrogenase/reductase SDR family member 7C from Mus musculus (Mouse).